A 20-amino-acid chain; its full sequence is Peptidase T (20 aa).

This sequence belongs to the peptidase M20B family. Requires Zn(2+) as cofactor. It depends on Co(2+) as a cofactor.

It localises to the cell envelope. It catalyses the reaction Release of the N-terminal residue from a tripeptide.. Inhibited by the chelating agents EDTA and 1,10-phenanthroline, by bestatin and amastatin, p-hydroxymercuribenzoate and some divalent cations at high concentration. Its function is as follows. Cleaves a wide range of dipeptides and tripeptides, but does not display activity against larger peptides. May have a role in the survival of F.nucleatum in the subgingival environment of the mouth. This chain is Peptidase T (pepT), found in Fusobacterium nucleatum subsp. polymorphum (Fusobacterium polymorphum).